The sequence spans 416 residues: Mitochondrial inner membrane i-AAA protease complex subunit MGR1 (416 aa).

Positions 1–28 are disordered; that stretch reads MAVFTPPSGNSNSTDHTHTQDDHDKDDN. The Mitochondrial intermembrane portion of the chain corresponds to 1–56; it reads MAVFTPPSGNSNSTDHTHTQDDHDKDDNDIKKFYIRPSLGLKLWGPLVPAPDNLPG. Residues 15–28 are compositionally biased toward basic and acidic residues; that stretch reads DHTHTQDDHDKDDN. A helical transmembrane segment spans residues 57–73; that stretch reads LYTLITIQSAVGFFALW. Residues 74–151 lie on the Mitochondrial matrix side of the membrane; that stretch reads RLRRLYKLPP…RQSRFVSVRK (78 aa). The helical transmembrane segment at 152–169 threads the bilayer; that stretch reads LLWGLFGSLLLSQSLLEL. At 170–416 the chain is on the mitochondrial intermembrane side; that stretch reads TRLNFLKYDP…PKALTNEKTH (247 aa). The segment covering 390-400 has biased composition (polar residues); the sequence is SHTKTPTSTDQ. Residues 390 to 416 are disordered; sequence SHTKTPTSTDQPLPGPTPKALTNEKTH.

It belongs to the MGR1 family. Component of the mitochondrial inner membrane i-AAA protease complex composed of at least MRG1 and YME1. Interacts directly with YME1.

It is found in the mitochondrion inner membrane. Functionally, component of the mitochondrial inner membrane i-AAA protease complex required for mitochondrial inner membrane protein turnover. Required for growth of cells lacking the mitochondrial genome. The protein is Mitochondrial inner membrane i-AAA protease complex subunit MGR1 (MGR1) of Saccharomyces cerevisiae (strain YJM789) (Baker's yeast).